Consider the following 558-residue polypeptide: Deleted in azoospermia protein 2 (558 aa).

The span at 1 to 10 (MSAANPETPN) shows a compositional bias: polar residues. Residues 1–27 (MSAANPETPNSTISREASTQSSSAAAS) form a disordered region. Low complexity predominate over residues 11-27 (STISREASTQSSSAAAS). The region spanning 40–115 (NTVFVGGIDA…KKLKLGPAIR (76 aa)) is the RRM domain. DAZ domains lie at 167–190 (AYSAYPHSPGQVITGCQLLVYNYQ), 191–214 (EYPTYPDSAFQVTTGYQLPVYNYQ), 215–238 (PFPAYPRSPFQVTAGYQLPVYNYQ), 239–262 (AFPAYPNSPFQVATGYQFPVYNYQ), 263–286 (PFPAYPSSPFQVTAGYQLPVYNYQ), 287–310 (AFPAYPNSPFQVATGYQFPVYNYQ), 311–334 (AFPAYPNSPVQVTTGYQLPVYNYQ), 335–358 (AFPAYPNSPVQVTTGYQLPVYNYQ), 359–382 (AFPAYPSSPFQVTTGYQLPVYNYQ), 383–406 (AFPAYPSSPFQVTTGYQLPVYNYQ), 407–430 (AFPAYPSSPFQVTTGYQLPVYNYQ), 431–454 (AFPAYPSSPFQVTTGYQLPVYNYQ), 455–478 (AFPAYPSSPFQVTTGYQLPVYNYQ), 479–502 (AFPAYPSSPFQVTTGYQLPVYNYQ), and 503–526 (AFPAYPNSAVQVTTGYQFHVYNYQ).

It belongs to the RRM DAZ family. Forms a heterodimer with BOLL and DAZL. Interacts with PUM2, DAZAP1, DAZAP2, DZIP1 and DZIP3. Testis specific.

The protein localises to the cytoplasm. The protein resides in the nucleus. Its function is as follows. RNA-binding protein that plays an essential role in spermatogenesis. May act by binding to the 3'-UTR of mRNAs and regulating their translation. This is Deleted in azoospermia protein 2 (DAZ2) from Homo sapiens (Human).